A 276-amino-acid polypeptide reads, in one-letter code: DnaJ homolog subfamily C member 27-B (276 aa).

GTP-binding positions include 23–30, 71–75, and 137–140; these read GNAEVGKS, DMAGH, and NKID. Residues 220–276 enclose the J domain; that stretch reads DSWDMLGVKPGATRDEVNKAYRKLAVLLHPDKCVAPGSEDAFKAVVNARTALLKNIK.

Belongs to the small GTPase superfamily. Rab family.

It localises to the nucleus. GTPase possibly involved in regulation of the MEK/ERK pathway. The protein is DnaJ homolog subfamily C member 27-B (dnajc27-b) of Xenopus laevis (African clawed frog).